Here is a 301-residue protein sequence, read N- to C-terminus: Sulfate adenylyltransferase subunit 2 (301 aa).

This sequence belongs to the PAPS reductase family. CysD subfamily. In terms of assembly, heterodimer composed of CysD, the smaller subunit, and CysN.

The enzyme catalyses sulfate + ATP + H(+) = adenosine 5'-phosphosulfate + diphosphate. The protein operates within sulfur metabolism; hydrogen sulfide biosynthesis; sulfite from sulfate: step 1/3. With CysN forms the ATP sulfurylase (ATPS) that catalyzes the adenylation of sulfate producing adenosine 5'-phosphosulfate (APS) and diphosphate, the first enzymatic step in sulfur assimilation pathway. APS synthesis involves the formation of a high-energy phosphoric-sulfuric acid anhydride bond driven by GTP hydrolysis by CysN coupled to ATP hydrolysis by CysD. The polypeptide is Sulfate adenylyltransferase subunit 2 (Geotalea daltonii (strain DSM 22248 / JCM 15807 / FRC-32) (Geobacter daltonii)).